The following is a 140-amino-acid chain: Nucleoside diphosphate kinase (140 aa).

ATP-binding residues include lysine 11, phenylalanine 59, arginine 87, threonine 93, arginine 104, and asparagine 114. Histidine 117 acts as the Pros-phosphohistidine intermediate in catalysis.

This sequence belongs to the NDK family. In terms of assembly, homotetramer. Mg(2+) serves as cofactor.

The protein resides in the cytoplasm. It catalyses the reaction a 2'-deoxyribonucleoside 5'-diphosphate + ATP = a 2'-deoxyribonucleoside 5'-triphosphate + ADP. It carries out the reaction a ribonucleoside 5'-diphosphate + ATP = a ribonucleoside 5'-triphosphate + ADP. In terms of biological role, major role in the synthesis of nucleoside triphosphates other than ATP. The ATP gamma phosphate is transferred to the NDP beta phosphate via a ping-pong mechanism, using a phosphorylated active-site intermediate. The sequence is that of Nucleoside diphosphate kinase from Bradyrhizobium diazoefficiens (strain JCM 10833 / BCRC 13528 / IAM 13628 / NBRC 14792 / USDA 110).